Consider the following 414-residue polypeptide: Zinc metalloproteinase-disintegrin-like batroxstatin-3 (414 aa).

N-linked (GlcNAc...) asparagine glycosylation is found at N7 and N70. One can recognise a Peptidase M12B domain in the interval 10 to 204; the sequence is KYIKLVIVAD…HTPQCILNEP (195 aa). Disulfide bonds link C121/C199, C161/C183, and C163/C168. H146 lines the Zn(2+) pocket. Residue E147 is part of the active site. Zn(2+)-binding residues include H150 and H156. A Disintegrin domain is found at 212–298; sequence PEVCGNYLLE…HCPTDRFHRN (87 aa). Residues V214, N217, E221, E224, and D227 each contribute to the Ca(2+) site. 14 cysteine pairs are disulfide-bonded: C215–C244, C226–C239, C228–C234, C238–C261, C252–C258, C257–C283, C270–C290, C277–C309, C302–C314, C321–C371, C336–C381, C349–C359, C366–C403, and C397–C408. The D/ECD-tripeptide signature appears at 276 to 278; it reads ECD. Ca(2+) contacts are provided by D278, E281, D293, and R294.

Belongs to the venom metalloproteinase (M12B) family. P-III subfamily. P-IIIa sub-subfamily. In terms of assembly, monomer. Requires Zn(2+) as cofactor. Expressed by the venom gland.

It is found in the secreted. Functionally, snake venom zinc metalloprotease that induces apoptosis in vascular endothelial cells (VEC), without degrading the extracellular matrix (it cannot cleave collagen) or inhibiting adhesion of VEC. Has also fibrinogenolytic and hemorrhagic activities. The chain is Zinc metalloproteinase-disintegrin-like batroxstatin-3 from Bothrops atrox (Barba amarilla).